The following is a 339-amino-acid chain: Heat-inducible transcription repressor HrcA (339 aa).

This sequence belongs to the HrcA family.

Its function is as follows. Negative regulator of class I heat shock genes (grpE-dnaK-dnaJ and groELS operons). Prevents heat-shock induction of these operons. The chain is Heat-inducible transcription repressor HrcA from Clostridium perfringens (strain ATCC 13124 / DSM 756 / JCM 1290 / NCIMB 6125 / NCTC 8237 / Type A).